A 216-amino-acid polypeptide reads, in one-letter code: Probable GTP-binding protein EngB (216 aa).

Positions 37-214 (GSVEIAFAGR…RAAMIRLLDE (178 aa)) constitute an EngB-type G domain. Residues 45–52 (GRSNVGKS), 72–76 (GRTQE), 92–95 (DMPG), 159–162 (TKAD), and 193–195 (TSS) contribute to the GTP site. Mg(2+) is bound by residues S52 and T74.

This sequence belongs to the TRAFAC class TrmE-Era-EngA-EngB-Septin-like GTPase superfamily. EngB GTPase family. The cofactor is Mg(2+).

Its function is as follows. Necessary for normal cell division and for the maintenance of normal septation. The sequence is that of Probable GTP-binding protein EngB from Rhodopseudomonas palustris (strain TIE-1).